The primary structure comprises 353 residues: S-adenosylmethionine:tRNA ribosyltransferase-isomerase (353 aa).

Belongs to the QueA family. In terms of assembly, monomer.

It localises to the cytoplasm. It carries out the reaction 7-aminomethyl-7-carbaguanosine(34) in tRNA + S-adenosyl-L-methionine = epoxyqueuosine(34) in tRNA + adenine + L-methionine + 2 H(+). It functions in the pathway tRNA modification; tRNA-queuosine biosynthesis. Its function is as follows. Transfers and isomerizes the ribose moiety from AdoMet to the 7-aminomethyl group of 7-deazaguanine (preQ1-tRNA) to give epoxyqueuosine (oQ-tRNA). The polypeptide is S-adenosylmethionine:tRNA ribosyltransferase-isomerase (Cupriavidus metallidurans (strain ATCC 43123 / DSM 2839 / NBRC 102507 / CH34) (Ralstonia metallidurans)).